The following is a 497-amino-acid chain: Probable cytosol aminopeptidase (497 aa).

Mn(2+) is bound by residues lysine 264 and aspartate 269. Residue lysine 276 is part of the active site. Mn(2+) contacts are provided by aspartate 287, aspartate 347, and glutamate 349. Residue arginine 351 is part of the active site.

Belongs to the peptidase M17 family. It depends on Mn(2+) as a cofactor.

It is found in the cytoplasm. It carries out the reaction Release of an N-terminal amino acid, Xaa-|-Yaa-, in which Xaa is preferably Leu, but may be other amino acids including Pro although not Arg or Lys, and Yaa may be Pro. Amino acid amides and methyl esters are also readily hydrolyzed, but rates on arylamides are exceedingly low.. The enzyme catalyses Release of an N-terminal amino acid, preferentially leucine, but not glutamic or aspartic acids.. Presumably involved in the processing and regular turnover of intracellular proteins. Catalyzes the removal of unsubstituted N-terminal amino acids from various peptides. The protein is Probable cytosol aminopeptidase of Thermosynechococcus vestitus (strain NIES-2133 / IAM M-273 / BP-1).